Consider the following 711-residue polypeptide: Hepatocyte growth factor-like protein (711 aa).

Positions 1-18 (MGWLPLLLLLTQCLGVPG) are cleaved as a signal peptide. Residues 21-105 (SPLNDFQVLR…GRCDLFQKKD (85 aa)) enclose the PAN domain. Intrachain disulfides connect Cys-56–Cys-78, Cys-60–Cys-66, Cys-110–Cys-186, Cys-131–Cys-169, Cys-157–Cys-181, Cys-191–Cys-268, Cys-194–Cys-324, Cys-212–Cys-251, Cys-240–Cys-263, Cys-283–Cys-361, Cys-304–Cys-343, Cys-332–Cys-355, Cys-370–Cys-448, Cys-391–Cys-431, Cys-419–Cys-443, Cys-468–Cys-588, Cys-507–Cys-523, Cys-602–Cys-667, Cys-632–Cys-646, and Cys-657–Cys-685. N-linked (GlcNAc...) asparagine glycosylation is present at Asn-72. 4 Kringle domains span residues 110–186 (CIMN…IKSC), 191–268 (CVWC…LPRC), 283–361 (CFRG…IRRC), and 370–448 (CYHG…LRRC). N-linked (GlcNAc...) asparagine glycosylation is present at Asn-296. The Peptidase S1 domain occupies 484 to 709 (VVGGHPGNSP…FVDWIHKVMR (226 aa)). N-linked (GlcNAc...) asparagine glycosylation is present at Asn-615.

This sequence belongs to the peptidase S1 family. Plasminogen subfamily. As to quaternary structure, dimer of an alpha chain and a beta chain linked by a disulfide bond. Interacts (via beta chain) with MST1R (via SEMA domain). Post-translationally, cleaved after Arg-483, probably by HPN/Hepsin, to yield the active form consisting of two disulfide-linked chains.

It is found in the secreted. The chain is Hepatocyte growth factor-like protein (MST1) from Homo sapiens (Human).